The primary structure comprises 427 residues: Serine--tRNA ligase (427 aa).

T235–E237 is a binding site for L-serine. ATP contacts are provided by residues R266–E268 and V282. E289 provides a ligand contact to L-serine. E353–S356 is a binding site for ATP. An L-serine-binding site is contributed by S389.

The protein belongs to the class-II aminoacyl-tRNA synthetase family. Type-1 seryl-tRNA synthetase subfamily. Homodimer. The tRNA molecule binds across the dimer.

It is found in the cytoplasm. It carries out the reaction tRNA(Ser) + L-serine + ATP = L-seryl-tRNA(Ser) + AMP + diphosphate + H(+). The enzyme catalyses tRNA(Sec) + L-serine + ATP = L-seryl-tRNA(Sec) + AMP + diphosphate + H(+). It participates in aminoacyl-tRNA biosynthesis; selenocysteinyl-tRNA(Sec) biosynthesis; L-seryl-tRNA(Sec) from L-serine and tRNA(Sec): step 1/1. Catalyzes the attachment of serine to tRNA(Ser). Is also able to aminoacylate tRNA(Sec) with serine, to form the misacylated tRNA L-seryl-tRNA(Sec), which will be further converted into selenocysteinyl-tRNA(Sec). This is Serine--tRNA ligase from Chlorobaculum parvum (strain DSM 263 / NCIMB 8327) (Chlorobium vibrioforme subsp. thiosulfatophilum).